A 256-amino-acid chain; its full sequence is Triosephosphate isomerase (256 aa).

9–11 (NWK) is a substrate binding site. Catalysis depends on His97, which acts as the Electrophile. Catalysis depends on Glu169, which acts as the Proton acceptor. Residues Gly175, Ser214, and 235 to 236 (GG) each bind substrate.

It belongs to the triosephosphate isomerase family. Homodimer.

The protein localises to the cytoplasm. It carries out the reaction D-glyceraldehyde 3-phosphate = dihydroxyacetone phosphate. It participates in carbohydrate biosynthesis; gluconeogenesis. It functions in the pathway carbohydrate degradation; glycolysis; D-glyceraldehyde 3-phosphate from glycerone phosphate: step 1/1. Functionally, involved in the gluconeogenesis. Catalyzes stereospecifically the conversion of dihydroxyacetone phosphate (DHAP) to D-glyceraldehyde-3-phosphate (G3P). The chain is Triosephosphate isomerase from Vibrio parahaemolyticus serotype O3:K6 (strain RIMD 2210633).